The chain runs to 144 residues: 3-hydroxyacyl-[acyl-carrier-protein] dehydratase FabZ (144 aa).

H47 is a catalytic residue.

It belongs to the thioester dehydratase family. FabZ subfamily.

Its subcellular location is the cytoplasm. It catalyses the reaction a (3R)-hydroxyacyl-[ACP] = a (2E)-enoyl-[ACP] + H2O. Functionally, involved in unsaturated fatty acids biosynthesis. Catalyzes the dehydration of short chain beta-hydroxyacyl-ACPs and long chain saturated and unsaturated beta-hydroxyacyl-ACPs. The polypeptide is 3-hydroxyacyl-[acyl-carrier-protein] dehydratase FabZ (Dechloromonas aromatica (strain RCB)).